A 175-amino-acid polypeptide reads, in one-letter code: uncharacterized protein (175 aa).

Positions Lys107 to Glu138 form a coiled coil.

This is an uncharacterized protein from Aquifex aeolicus (strain VF5).